Consider the following 199-residue polypeptide: Large ribosomal subunit protein bL25 (199 aa).

Belongs to the bacterial ribosomal protein bL25 family. CTC subfamily. Part of the 50S ribosomal subunit; part of the 5S rRNA/L5/L18/L25 subcomplex. Contacts the 5S rRNA. Binds to the 5S rRNA independently of L5 and L18.

This is one of the proteins that binds to the 5S RNA in the ribosome where it forms part of the central protuberance. The polypeptide is Large ribosomal subunit protein bL25 (Nostoc punctiforme (strain ATCC 29133 / PCC 73102)).